The following is a 301-amino-acid chain: Ribosomal RNA small subunit methyltransferase A (301 aa).

S-adenosyl-L-methionine-binding residues include Asn-23, Ile-25, Gly-50, Glu-72, Asp-97, and Asn-149.

This sequence belongs to the class I-like SAM-binding methyltransferase superfamily. rRNA adenine N(6)-methyltransferase family. RsmA subfamily.

It is found in the cytoplasm. The enzyme catalyses adenosine(1518)/adenosine(1519) in 16S rRNA + 4 S-adenosyl-L-methionine = N(6)-dimethyladenosine(1518)/N(6)-dimethyladenosine(1519) in 16S rRNA + 4 S-adenosyl-L-homocysteine + 4 H(+). Its function is as follows. Specifically dimethylates two adjacent adenosines (A1518 and A1519) in the loop of a conserved hairpin near the 3'-end of 16S rRNA in the 30S particle. May play a critical role in biogenesis of 30S subunits. This chain is Ribosomal RNA small subunit methyltransferase A, found in Rickettsia peacockii (strain Rustic).